A 399-amino-acid polypeptide reads, in one-letter code: Bombesin receptor subtype-3 (399 aa).

The span at 1–31 shows a compositional bias: polar residues; the sequence is MSQRQPQSPNQTLISTTNDTESSSSVVPNDS. The disordered stretch occupies residues 1 to 38; it reads MSQRQPQSPNQTLISTTNDTESSSSVVPNDSTNKRRTG. Residues 1-41 lie on the Extracellular side of the membrane; it reads MSQRQPQSPNQTLISTTNDTESSSSVVPNDSTNKRRTGDNS. Residues Asn-10, Asn-18, and Asn-29 are each glycosylated (N-linked (GlcNAc...) asparagine). The helical transmembrane segment at 42 to 63 threads the bilayer; it reads PGIEALCAIYITYAVIISVGIL. The Cytoplasmic segment spans residues 64–82; the sequence is GNAILIKVFFKTKSMQTVP. Residues 83 to 103 form a helical membrane-spanning segment; sequence NIFITSLAFGDLLLLLTCVPV. At 104-121 the chain is on the extracellular side; the sequence is DVTHYLAEGWLFGRIGCK. A disulfide bond links Cys-120 and Cys-203. A helical membrane pass occupies residues 122 to 143; sequence VLSFIRLTSVGVSVFTLTILSA. The Cytoplasmic segment spans residues 144 to 163; it reads DRYKAVVKPLERQPPNAILK. Residues 164-184 traverse the membrane as a helical segment; it reads TCAKAGCIWIMSMIIALPEAI. The Extracellular portion of the chain corresponds to 185 to 220; the sequence is FSNVYTFQDPDKNVTFKACASYPVSERLLQEIHSLL. A helical membrane pass occupies residues 221–241; sequence CFLVFYIIPLSIISVYYSLIA. Residues 242 to 272 are Cytoplasmic-facing; that stretch reads RTLYKSTLNIPTEEQRHARKQIESRKRIAKT. A helical membrane pass occupies residues 273–293; the sequence is VLVLVALFALCWLPNHLLYLY. Topologically, residues 294-313 are extracellular; it reads RSFTSQTYMDSSTVHLFVTI. A helical membrane pass occupies residues 314–333; the sequence is ISRILAFSNSCVNPFALYWL. Residues 334-399 lie on the Cytoplasmic side of the membrane; sequence SNTFQQHFKA…CSVKKEDDRV (66 aa).

The protein belongs to the G-protein coupled receptor 1 family. Interacts with C6orf89.

It localises to the cell membrane. In terms of biological role, role in sperm cell division, maturation, or function. This receptor mediates its action by association with G proteins that activate a phosphatidylinositol-calcium second messenger system. The polypeptide is Bombesin receptor subtype-3 (BRS3) (Ovis aries (Sheep)).